Here is a 120-residue protein sequence, read N- to C-terminus: Large ribosomal subunit protein eL34z (120 aa).

Residues 31–51 are disordered; the sequence is VYQTTKKRASGPKCPVTGKRI.

This sequence belongs to the eukaryotic ribosomal protein eL34 family.

The polypeptide is Large ribosomal subunit protein eL34z (RPL34A) (Arabidopsis thaliana (Mouse-ear cress)).